A 136-amino-acid chain; its full sequence is Small ribosomal subunit protein uS8c (136 aa).

It belongs to the universal ribosomal protein uS8 family. In terms of assembly, part of the 30S ribosomal subunit.

The protein localises to the plastid. It localises to the chloroplast. Functionally, one of the primary rRNA binding proteins, it binds directly to 16S rRNA central domain where it helps coordinate assembly of the platform of the 30S subunit. In Saccharum officinarum (Sugarcane), this protein is Small ribosomal subunit protein uS8c (rps8).